A 347-amino-acid chain; its full sequence is Syntaxin-32 (347 aa).

Residues 1–325 (MSARHGQSSY…RYLNSISSNR (325 aa)) are Cytoplasmic-facing. Disordered stretches follow at residues 172 to 191 (HESRRQLFSSNASKESTNPF) and 208 to 251 (PLPW…QQMV). Polar residues-rich tracts occupy residues 177–191 (QLFSSNASKESTNPF) and 213–222 (NGSSSSSSQL). The span at 237-249 (QQSQQQQQQQQQQ) shows a compositional bias: low complexity. The 63-residue stretch at 255–317 (DTYMQGRAEA…EGAQSQLARY (63 aa)) folds into the t-SNARE coiled-coil homology domain. Residues 326-346 (WLMMKIFFVLIAFLMIFLFFV) traverse the membrane as a helical; Anchor for type IV membrane protein segment. A topological domain (vesicular) is located at residue alanine 347.

This sequence belongs to the syntaxin family. Part of the t-SNARE complex.

It is found in the golgi apparatus. The protein localises to the cis-Golgi network membrane. Its function is as follows. Vesicle trafficking protein that functions in the secretory pathway. This chain is Syntaxin-32 (SYP32), found in Arabidopsis thaliana (Mouse-ear cress).